Consider the following 378-residue polypeptide: Sterol 24-C-methyltransferase erg6 (378 aa).

This sequence belongs to the class I-like SAM-binding methyltransferase superfamily. Erg6/SMT family.

It localises to the nucleus. The protein localises to the endoplasmic reticulum. It carries out the reaction zymosterol + S-adenosyl-L-methionine = fecosterol + S-adenosyl-L-homocysteine + H(+). It catalyses the reaction lanosterol + S-adenosyl-L-methionine = eburicol + S-adenosyl-L-homocysteine + H(+). It functions in the pathway steroid metabolism; ergosterol biosynthesis. Its function is as follows. Sterol 24-C-methyltransferase; part of the third module of ergosterol biosynthesis pathway that includes by the late steps of the pathway. Erg6 catalyzes the methyl transfer from S-adenosyl-methionine to the C-24 of zymosterol to form fecosterol. The third module or late pathway involves the ergosterol synthesis itself through consecutive reactions that mainly occur in the endoplasmic reticulum (ER) membrane. Firstly, the squalene synthase erg9 catalyzes the condensation of 2 farnesyl pyrophosphate moieties to form squalene, which is the precursor of all steroids. Secondly, squalene is converted into lanosterol by the consecutive action of the squalene epoxidase erg1 and the lanosterol synthase erg7. The lanosterol 14-alpha-demethylase erg11/cyp1 catalyzes C14-demethylation of lanosterol to produce 4,4'-dimethyl cholesta-8,14,24-triene-3-beta-ol. In the next steps, a complex process involving various demethylation, reduction and desaturation reactions catalyzed by the C-14 reductase erg24 and the C-4 demethylation complex erg25-erg26-erg27 leads to the production of zymosterol. Erg28 likely functions in the C-4 demethylation complex reaction by tethering erg26 and Erg27 to the endoplasmic reticulum or to facilitate interaction between these proteins. Then, the sterol 24-C-methyltransferase erg6 catalyzes the methyl transfer from S-adenosyl-methionine to the C-24 of zymosterol to form fecosterol. The C-8 sterol isomerase erg2 catalyzes the reaction which results in unsaturation at C-7 in the B ring of sterols and thus converts fecosterol to episterol. The sterol-C5-desaturases erg31 and erg32 then catalyze the introduction of a C-5 double bond in the B ring to produce 5-dehydroepisterol. The C-22 sterol desaturase erg5 further converts 5-dehydroepisterol into ergosta-5,7,22,24(28)-tetraen-3beta-ol by forming the C-22(23) double bond in the sterol side chain. Finally, ergosta-5,7,22,24(28)-tetraen-3beta-ol is substrate of the C-24(28) sterol reductase erg4 to produce ergosterol. In the genus Schizosaccharomyces, a second route exists between lanosterol and fecosterol, via the methylation of lanosterol to eburicol by erg6, followed by C14-demethylation by erg11/cyp1 and C4-demethylation by the demethylation complex erg25-erg26-erg27. In Schizosaccharomyces pombe (strain 972 / ATCC 24843) (Fission yeast), this protein is Sterol 24-C-methyltransferase erg6.